The following is a 552-amino-acid chain: Dihydroxy-acid dehydratase (552 aa).

Asp-78 provides a ligand contact to Mg(2+). Position 119 (Cys-119) interacts with [2Fe-2S] cluster. The Mg(2+) site is built by Asp-120 and Lys-121. N6-carboxylysine is present on Lys-121. Cys-191 contributes to the [2Fe-2S] cluster binding site. Glu-442 contributes to the Mg(2+) binding site. Ser-468 acts as the Proton acceptor in catalysis.

This sequence belongs to the IlvD/Edd family. In terms of assembly, homodimer. [2Fe-2S] cluster serves as cofactor. Mg(2+) is required as a cofactor.

It catalyses the reaction (2R)-2,3-dihydroxy-3-methylbutanoate = 3-methyl-2-oxobutanoate + H2O. The enzyme catalyses (2R,3R)-2,3-dihydroxy-3-methylpentanoate = (S)-3-methyl-2-oxopentanoate + H2O. It participates in amino-acid biosynthesis; L-isoleucine biosynthesis; L-isoleucine from 2-oxobutanoate: step 3/4. It functions in the pathway amino-acid biosynthesis; L-valine biosynthesis; L-valine from pyruvate: step 3/4. Its function is as follows. Functions in the biosynthesis of branched-chain amino acids. Catalyzes the dehydration of (2R,3R)-2,3-dihydroxy-3-methylpentanoate (2,3-dihydroxy-3-methylvalerate) into 2-oxo-3-methylpentanoate (2-oxo-3-methylvalerate) and of (2R)-2,3-dihydroxy-3-methylbutanoate (2,3-dihydroxyisovalerate) into 2-oxo-3-methylbutanoate (2-oxoisovalerate), the penultimate precursor to L-isoleucine and L-valine, respectively. The sequence is that of Dihydroxy-acid dehydratase from Caldicellulosiruptor saccharolyticus (strain ATCC 43494 / DSM 8903 / Tp8T 6331).